Reading from the N-terminus, the 455-residue chain is Golgi pH regulator (455 aa).

5 helical membrane passes run 5 to 25, 46 to 66, 79 to 99, 114 to 134, and 150 to 170; these read IDSSIMVTSQILFFGFGWLFF, VTFAFSCTMFELIIFEILGVL, LCVILLILVFMVPFYIGYFIV, CLLWLTFMYFFWKLGDPFPIL, and VGVIGVTLMALLSGFGAVNCP. Residues asparagine 180 and asparagine 243 are each glycosylated (N-linked (GlcNAc...) asparagine). A run of 4 helical transmembrane segments spans residues 290–310, 343–363, 378–398, and 425–445; these read GYFFSIYCVWKIFMATINIVL, ISFILVGIIIVSSIRGLLITL, VIVLLLAQIMGMYFVSSVLLI, and WFDVIFLVSALSSILFLYLAH.

Belongs to the Golgi pH regulator (TC 1.A.38) family. In terms of assembly, homotrimer. Interacts with RABL3; the interaction stabilizes GPR89B.

The protein resides in the golgi apparatus membrane. It catalyses the reaction iodide(out) = iodide(in). It carries out the reaction chloride(in) = chloride(out). The catalysed reaction is bromide(in) = bromide(out). The enzyme catalyses fluoride(in) = fluoride(out). Functionally, voltage-gated channel that enables the transfer of anions such as iodide, chloride, bromide and fluoride which may function in counter-ion conductance and participates in Golgi acidification. Plays a role in lymphocyte development, probably by acting as a RABL3 effector in hematopoietic cells. The protein is Golgi pH regulator of Cricetulus griseus (Chinese hamster).